The sequence spans 431 residues: Adenylosuccinate synthetase (431 aa).

GTP contacts are provided by residues 13 to 19 (GDEGKGK) and 41 to 43 (GHT). Aspartate 14 (proton acceptor) is an active-site residue. Aspartate 14 and glycine 41 together coordinate Mg(2+). IMP contacts are provided by residues 14 to 17 (DEGK), 39 to 42 (NAGH), threonine 130, arginine 144, glutamine 225, threonine 240, and arginine 304. Histidine 42 functions as the Proton donor in the catalytic mechanism. Position 300 to 306 (300 to 306 (TTTGRSR)) interacts with substrate. GTP is bound by residues arginine 306, 332–334 (KLD), and 414–416 (STG).

The protein belongs to the adenylosuccinate synthetase family. In terms of assembly, homodimer. Mg(2+) serves as cofactor.

It localises to the cytoplasm. It carries out the reaction IMP + L-aspartate + GTP = N(6)-(1,2-dicarboxyethyl)-AMP + GDP + phosphate + 2 H(+). It functions in the pathway purine metabolism; AMP biosynthesis via de novo pathway; AMP from IMP: step 1/2. Functionally, plays an important role in the de novo pathway of purine nucleotide biosynthesis. Catalyzes the first committed step in the biosynthesis of AMP from IMP. The sequence is that of Adenylosuccinate synthetase from Marinobacter nauticus (strain ATCC 700491 / DSM 11845 / VT8) (Marinobacter aquaeolei).